A 168-amino-acid polypeptide reads, in one-letter code: INO80 complex subunit 3 (168 aa).

Positions 115-129 are enriched in polar residues; the sequence is TNSTLSTPKSFHSPL. The disordered stretch occupies residues 115–168; it reads TNSTLSTPKSFHSPLQSRGISPSSAQSSAAVSSSRKQKRKRTSEGPSERRARKK. Residues 130 to 148 show a composition bias toward low complexity; that stretch reads QSRGISPSSAQSSAAVSSS. Positions 156–168 are enriched in basic and acidic residues; the sequence is TSEGPSERRARKK.

In terms of assembly, component of the INO80 chromatin remodeling complex.

It is found in the nucleus. In terms of biological role, component of the INO80 complex which remodels chromatin by shifting nucleosomes and is involved in DNA repair. The polypeptide is INO80 complex subunit 3 (iec3) (Schizosaccharomyces pombe (strain 972 / ATCC 24843) (Fission yeast)).